A 469-amino-acid polypeptide reads, in one-letter code: 3-isopropylmalate dehydratase large subunit (469 aa).

[4Fe-4S] cluster is bound by residues Cys-347, Cys-407, and Cys-410.

The protein belongs to the aconitase/IPM isomerase family. LeuC type 1 subfamily. Heterodimer of LeuC and LeuD. [4Fe-4S] cluster is required as a cofactor.

It catalyses the reaction (2R,3S)-3-isopropylmalate = (2S)-2-isopropylmalate. It participates in amino-acid biosynthesis; L-leucine biosynthesis; L-leucine from 3-methyl-2-oxobutanoate: step 2/4. Functionally, catalyzes the isomerization between 2-isopropylmalate and 3-isopropylmalate, via the formation of 2-isopropylmaleate. The sequence is that of 3-isopropylmalate dehydratase large subunit from Prochlorococcus marinus (strain NATL2A).